A 213-amino-acid chain; its full sequence is NADH dehydrogenase [ubiquinone] iron-sulfur protein 7, mitochondrial (213 aa).

A mitochondrion-targeting transit peptide spans 1 to 38 (MAVLSAPGLRGFRILGLRSSVGPAVQARGVHQSVATDG). Positions 31–53 (HQSVATDGPSSTQPALPKARAVA) are disordered. Positions 33 to 44 (SVATDGPSSTQP) are enriched in polar residues. 2 residues coordinate [4Fe-4S] cluster: Cys-88 and Cys-89. Position 111 is a hydroxyarginine (Arg-111). Cys-153 and Cys-183 together coordinate [4Fe-4S] cluster.

The protein belongs to the complex I 20 kDa subunit family. In terms of assembly, core subunit of respiratory chain NADH dehydrogenase (Complex I) which is composed of 45 different subunits. This is a component of the iron-sulfur (IP) fragment of the enzyme. It depends on [4Fe-4S] cluster as a cofactor. Post-translationally, hydroxylated at Arg-111 by NDUFAF5 early in the pathway of assembly of complex I, before the formation of the juncture between peripheral and membrane arms.

It is found in the mitochondrion inner membrane. It catalyses the reaction a ubiquinone + NADH + 5 H(+)(in) = a ubiquinol + NAD(+) + 4 H(+)(out). Core subunit of the mitochondrial membrane respiratory chain NADH dehydrogenase (Complex I) which catalyzes electron transfer from NADH through the respiratory chain, using ubiquinone as an electron acceptor. Essential for the catalytic activity of complex I. This is NADH dehydrogenase [ubiquinone] iron-sulfur protein 7, mitochondrial (NDUFS7) from Homo sapiens (Human).